A 398-amino-acid polypeptide reads, in one-letter code: Cytohesin-1 (398 aa).

M1 carries the N-acetylmethionine modification. Residues S10–A67 adopt a coiled-coil conformation. The SEC7 domain occupies F73 to N202. The 118-residue stretch at N260–S377 folds into the PH domain. A 1,2-diacyl-sn-glycero-3-phospho-(1D-myo-inositol-3,4,5-trisphosphate) contacts are provided by residues K269–T277, R281, Y292, R302, and N351. Residues R388–K396 form a C-terminal autoinhibitory region region.

Interacts with TRIM23 and CYTIP. Interacts (via coiled-coil domain) with FRMD4A (via coiled-coil domain). Interacts with FRMD4B. Found in a complex with PARD3, CYTH1 and FRMD4A. Interacts (via N-terminal domain) with INAVA (via N-terminal domain). In terms of processing, ubiquitinated by SCF(FBXW11) E3 ubiquitin-protein ligase complex. Ubiquitination induces proteasomal degradation.

It is found in the cell membrane. Its subcellular location is the cytoplasm. It localises to the cytosol. The protein localises to the cell junction. The protein resides in the tight junction. It is found in the adherens junction. Promotes guanine-nucleotide exchange on ARF1, ARF5 and ARF6. Promotes the activation of ARF factors through replacement of GDP with GTP. Plays an important role in membrane trafficking, during junctional remodeling and epithelial polarization, through regulation of ARF6 activity. The protein is Cytohesin-1 (CYTH1) of Chlorocebus aethiops (Green monkey).